The primary structure comprises 387 residues: tRNA pseudouridine synthase B (387 aa).

Asp43 serves as the catalytic Nucleophile.

It belongs to the pseudouridine synthase TruB family. Type 1 subfamily.

It carries out the reaction uridine(55) in tRNA = pseudouridine(55) in tRNA. In terms of biological role, responsible for synthesis of pseudouridine from uracil-55 in the psi GC loop of transfer RNAs. The polypeptide is tRNA pseudouridine synthase B (Bifidobacterium longum (strain DJO10A)).